The sequence spans 107 residues: Flagellar hook-basal body complex protein FliE (107 aa).

It belongs to the FliE family.

It is found in the bacterial flagellum basal body. The protein is Flagellar hook-basal body complex protein FliE of Cupriavidus pinatubonensis (strain JMP 134 / LMG 1197) (Cupriavidus necator (strain JMP 134)).